A 122-amino-acid polypeptide reads, in one-letter code: Small ribosomal subunit protein uS13 (122 aa).

Positions 95–122 (GLPVRGQRTHTNARTRKGKAKPIAGKKK) are disordered.

It belongs to the universal ribosomal protein uS13 family. Part of the 30S ribosomal subunit. Forms a loose heterodimer with protein S19. Forms two bridges to the 50S subunit in the 70S ribosome.

Its function is as follows. Located at the top of the head of the 30S subunit, it contacts several helices of the 16S rRNA. In the 70S ribosome it contacts the 23S rRNA (bridge B1a) and protein L5 of the 50S subunit (bridge B1b), connecting the 2 subunits; these bridges are implicated in subunit movement. Contacts the tRNAs in the A and P-sites. The protein is Small ribosomal subunit protein uS13 of Sphingopyxis alaskensis (strain DSM 13593 / LMG 18877 / RB2256) (Sphingomonas alaskensis).